The primary structure comprises 2193 residues: ATP-dependent helicase BRM (2193 aa).

Residue Met1 is modified to N-acetylmethionine. A compositionally biased stretch (gly residues) spans 1-10 (MQSGGSGGGP). Disordered regions lie at residues 1-126 (MQSG…QEGQ), 175-231 (MQDL…PGNM), 293-466 (QKAG…GFTK), 511-558 (SPAI…DNVG), and 580-649 (TSTD…ASAR). The segment covering 23–62 (ASTSSAASPSSSSSSVQQQQQQQQQQQQQQQLASRQQQQQ) has biased composition (low complexity). Residues 38-58 (VQQQQQQQQQQQQQQQLASRQ) adopt a coiled-coil conformation. The segment covering 79–88 (GVQGMMGGGN) has biased composition (gly residues). Low complexity-rich tracts occupy residues 91 to 102 (SSPGSMQMPQQS), 110 to 126 (QQQQ…QEGQ), and 180 to 192 (PSSQ…SKPS). The span at 204–223 (ESSSQQRNETKSHPQQQVGT) shows a compositional bias: polar residues. The span at 301 to 320 (ASQSPSIPISSQPASSSVVP) shows a compositional bias: low complexity. Composition is skewed to polar residues over residues 325-339 (PHAN…QSGS), 347-358 (STGSFASTSSPR), 383-412 (QPTN…STKK), and 421-433 (QMQQ…TPTP). A compositionally biased stretch (low complexity) spans 445–463 (SNSSLQSGQGTQQAQQRSG). Residues 463 to 499 (GFTKQQLHVLKAQILAFRRLKKGEGSLPPELLQAISP) form the QLQ domain. Composition is skewed to basic and acidic residues over residues 517–537 (VQDR…ECGK) and 611–621 (PRSDSTADKGK). Polar residues predominate over residues 626 to 638 (DGSQSKVPPQANS). Residues 705–712 (LKKINGLL) carry the Nuclear localization signal 1 motif. Positions 726-795 (VLRLQIEEKK…QKAVREKQLK (70 aa)) form a coiled coil. In terms of domain architecture, Helicase ATP-binding spans 993–1158 (LSLYNNKLNG…WSLLNLLLPD (166 aa)). 1006–1013 (DEMGLGKT) lines the ATP pocket. The stretch at 1109-1129 (DEAQRMKDRESVLARDLDRYR) forms a coiled coil. Residues 1312-1489 (ILDRILIKLQ…QYKIDMADEV (178 aa)) enclose the Helicase C-terminal domain. Disordered regions lie at residues 1583–1775 (SKKP…DEEQ) and 1789–1894 (LRPR…NAGA). The segment covering 1608-1617 (KRGRPKSKKI) has biased composition (basic residues). Positions 1618-1638 (NYKEIEDDIAGYSEESSEERN) form a coiled coil. Phosphoserine is present on Ser1641. Acidic residues predominate over residues 1642–1657 (GNEEEGDIRQFDDDEL). Positions 1821–1832 (TVVDSHSSRQDQ) are enriched in basic and acidic residues. Residues 1833–1842 (SDSSSRLRSV) are compositionally biased toward low complexity. Composition is skewed to polar residues over residues 1848 to 1870 (ASTS…QLTV) and 1882 to 1892 (DGTSPISSSNA). The region spanning 1895-2005 (RMSHIIQKRC…NLFFDLLKMS (111 aa)) is the Bromo domain. Residues 1901-1908 (QKRCKIVI) carry the Nuclear localization signal 2 motif. The segment covering 2022-2032 (GSAPTLVSTPT) has biased composition (polar residues). Positions 2022–2193 (GSAPTLVSTP…DSGKRRPSHL (172 aa)) are disordered. At Ser2137 the chain carries Phosphoserine. Residues 2149 to 2166 (LAQQQRWPNQPTHPNNSG) are compositionally biased toward polar residues.

This sequence belongs to the SNF2/RAD54 helicase family. Interacts with SWI3B, SWI3C, H3 and H4, but not with SWI3A, SWI3D or BSH. Interacts with LFY. Interacts with REF6. Binds to FGT1. Highly expressed in inflorescences and leaves. Low expression in siliques, roots and seedlings. Detected in shoot apical meristem, root meristem, vascular tissue of developing leaves, petals, stamens filaments, anthers and carpels.

The protein localises to the nucleus. The catalysed reaction is ATP + H2O = ADP + phosphate + H(+). ATPase subunit of a multiprotein complex equivalent of the SWI/SNF complex that acts by remodeling the chromatin by catalyzing an ATP-dependent alteration in the structure of nucleosomal DNA. Represses embryonic genes in leaves and controls shoot development and flowering. Activates flower homeotic genes. The association of BRM with its target genes requires REF6. Necessary to acquire heat stress (HS) memory, by globally binding to HS memory genes. The polypeptide is ATP-dependent helicase BRM (Arabidopsis thaliana (Mouse-ear cress)).